The chain runs to 743 residues: MTISNTIPITPELIAGHGLKPDEYQRILDLIGREPTFTELGIFSAMWNEHCSYKSSKKWLRTLPTKGPRVIQGPGENAGVVDIDDGDCVVFKMESHNHPSYIEPYQGAATGVGGILRDVFTMGARPIAAMNALRFGEPDHPKTRHLVSGVVSGVGGYGNSFGVPTVGGEVEFDARYNGNILVNAFAAGIAKSNAIFLSEAKGVGLPVVYLGAKTGRDGVGGATMASAEFDESIEEKRPTVQVGDPFTEKCLLEACLELMQTGAVIAIQDMGAAGLTCSAVEMGAKGDLGILLELDKVPVREERMTAYEMMLSESQERMLMVLQPEKEEQAKAIFVKWGLDFAIVGKTTDDLRFRVVHQGEEVANLPIKDLGDQAPEYDRPWRECGKPAPLPANLVAAPKNYGQALLQLVGSANQSSRRWVYEQYDTLIQGNSLQLPGGDAGVVRVDGHKSKALAFSSDVTPRYVEADPFEGGKQAVAECWRNITATGAEPLAATDNLNFGNPEKPEIMGQFVQAVKGIGEACRALDFPIVSGNVSLYNETNGVAILPTPTIAGVGLLPDWRKMARIGSANDGDKVIMIGLDGSHLGQSVYLRDVLDSREGPAPEVDLFAERRNGDFVRSVIRNGQATACHDISSGGLAVALAEMAMASGKGLTIDLDECKGAPHALLFGEDQARYVLTVPADVADFVCANAEGAGVPFRRLGTVGGDALVVGDLIALPIQQLRDTHESWFPDFMEGRGELAAE.

H50 is an active-site residue. Y53 and K92 together coordinate ATP. Mg(2+) is bound at residue E94. Substrate contacts are provided by residues 95 to 98 (SHNH) and R117. Residue H96 is the Proton acceptor of the active site. Residue D118 participates in Mg(2+) binding. A substrate-binding site is contributed by Q241. Mg(2+) is bound at residue D269. 313 to 315 (ESQ) is a substrate binding site. ATP contacts are provided by D495 and G532. N533 contacts Mg(2+). S535 contacts substrate.

Belongs to the FGAMS family. As to quaternary structure, monomer. Part of the FGAM synthase complex composed of 1 PurL, 1 PurQ and 2 PurS subunits.

It localises to the cytoplasm. It carries out the reaction N(2)-formyl-N(1)-(5-phospho-beta-D-ribosyl)glycinamide + L-glutamine + ATP + H2O = 2-formamido-N(1)-(5-O-phospho-beta-D-ribosyl)acetamidine + L-glutamate + ADP + phosphate + H(+). The protein operates within purine metabolism; IMP biosynthesis via de novo pathway; 5-amino-1-(5-phospho-D-ribosyl)imidazole from N(2)-formyl-N(1)-(5-phospho-D-ribosyl)glycinamide: step 1/2. Its function is as follows. Part of the phosphoribosylformylglycinamidine synthase complex involved in the purines biosynthetic pathway. Catalyzes the ATP-dependent conversion of formylglycinamide ribonucleotide (FGAR) and glutamine to yield formylglycinamidine ribonucleotide (FGAM) and glutamate. The FGAM synthase complex is composed of three subunits. PurQ produces an ammonia molecule by converting glutamine to glutamate. PurL transfers the ammonia molecule to FGAR to form FGAM in an ATP-dependent manner. PurS interacts with PurQ and PurL and is thought to assist in the transfer of the ammonia molecule from PurQ to PurL. The protein is Phosphoribosylformylglycinamidine synthase subunit PurL of Rhizobium etli (strain ATCC 51251 / DSM 11541 / JCM 21823 / NBRC 15573 / CFN 42).